A 287-amino-acid polypeptide reads, in one-letter code: Mitochondrial dicarboxylate carrier (287 aa).

3 Solcar repeats span residues 7–87 (SRWY…MRDY), 100–187 (NKVL…AKQL), and 196–279 (DNIF…LRKH). A run of 3 helical transmembrane segments spans residues 9–29 (WYFGGLASCGAACCTHPLDLL), 62–81 (GLSASLCRQMTYSLTRFAIY), and 102–122 (VLLGGISGLTGGFVGTPADLV). Position 158 is an N6-acetyllysine (Lys158). 3 helical membrane-spanning segments follow: residues 162-181 (GATMASSRGALVTVGQLSCY), 202-222 (FVSSFIAGGCATFLCQPLDVL), and 254-274 (GLFPAGIRLIPHTVLTFMFLE).

It belongs to the mitochondrial carrier (TC 2.A.29) family. In terms of tissue distribution, expressed at very high levels in white adipose tissue. And at low levels in brown adipose tissue, kidney and liver.

Its subcellular location is the mitochondrion inner membrane. It carries out the reaction (S)-malate(in) + phosphate(out) = (S)-malate(out) + phosphate(in). It catalyses the reaction malonate(out) + (S)-malate(in) = malonate(in) + (S)-malate(out). The enzyme catalyses (S)-malate(in) + succinate(out) = (S)-malate(out) + succinate(in). The catalysed reaction is (S)-malate(in) + sulfate(out) = (S)-malate(out) + sulfate(in). It carries out the reaction malonate(out) + phosphate(in) = malonate(in) + phosphate(out). It catalyses the reaction succinate(out) + phosphate(in) = succinate(in) + phosphate(out). The enzyme catalyses sulfate(out) + phosphate(in) = sulfate(in) + phosphate(out). The catalysed reaction is malonate(out) + succinate(in) = malonate(in) + succinate(out). Regulated by circadian protein CLOCK (Circadian Locomotor Output Cycles Kaput). In terms of biological role, catalyzes the electroneutral exchange or flux of physiologically important metabolites such as dicarboxylates (malonate, malate, succinate), inorganic sulfur-containing anions, and phosphate, across mitochondrial inner membrane. Plays an important role in gluconeogenesis, fatty acid metabolism, urea synthesis, and sulfur metabolism, particularly in liver, by supplying the substrates for the different metabolic processes. Regulates fatty acid release from adipocytes, and contributes to systemic insulin sensitivity. The chain is Mitochondrial dicarboxylate carrier from Mus musculus (Mouse).